We begin with the raw amino-acid sequence, 197 residues long: uncharacterized protein (197 aa).

Residues 11 to 31 form a helical membrane-spanning segment; it reads ICGFSLVALTIAGIVGGVYLV.

It localises to the membrane. This is an uncharacterized protein from Mycoplasma pneumoniae (strain ATCC 29342 / M129 / Subtype 1) (Mycoplasmoides pneumoniae).